The chain runs to 116 residues: DNA polymerase epsilon subunit 4 (116 aa).

Over residues 1-10 (MAAAAPGSGA) the composition is skewed to low complexity. Residues 1-36 (MAAAAPGSGAAREEEGTGGDAATPQPPAPTSAPGAR) form a disordered region.

In terms of assembly, component of the DNA polymerase epsilon complex consisting of four subunits: the catalytic subunit POLE and the accessory subunits POLE2, POLE3 and POLE4. Interaction with POLE3 is a prerequisite for further binding with POLE and POLE2.

Its subcellular location is the nucleus. Its function is as follows. Accessory component of the DNA polymerase epsilon complex. Participates in DNA repair and in chromosomal DNA replication. This Bos taurus (Bovine) protein is DNA polymerase epsilon subunit 4 (POLE4).